The sequence spans 534 residues: Glucans biosynthesis protein D (534 aa).

The tat-type signal signal peptide spans 1–26 (MQRRDFIRNASLALAAFGLPSLPACA).

Belongs to the OpgD/OpgG family. Post-translationally, predicted to be exported by the Tat system. The position of the signal peptide cleavage has not been experimentally proven.

The protein localises to the periplasm. It participates in glycan metabolism; osmoregulated periplasmic glucan (OPG) biosynthesis. In terms of biological role, probably involved in the control of the structural glucose backbone of osmoregulated periplasmic glucans (OPGs). This Stenotrophomonas maltophilia (strain K279a) protein is Glucans biosynthesis protein D.